Here is a 146-residue protein sequence, read N- to C-terminus: Globin (146 aa).

The residue at position 1 (Ser1) is an N-acetylserine. Residues 1-146 form the Globin domain; it reads SLSGAEADLL…IIDALKKAGK (146 aa). Residue His95 coordinates heme b.

This sequence belongs to the globin family. Monomer.

This Bursatella leachii (Ragged sea hare) protein is Globin.